The following is a 272-amino-acid chain: F-box protein PP2-B10 (272 aa).

The F-box domain maps to 11 to 57 (SSPFDSFPEDCISYIISFTNPRDACVAATVSKTFESTVKSDIIWEKF).

Part of a SCF (ASK-cullin-F-box) protein ligase complex. Interacts with SKP1B/ASK2, ASK11 and ASK12.

It functions in the pathway protein modification; protein ubiquitination. In terms of biological role, component of SCF(ASK-cullin-F-box) E3 ubiquitin ligase complexes, which may mediate the ubiquitination and subsequent proteasomal degradation of target proteins. This Arabidopsis thaliana (Mouse-ear cress) protein is F-box protein PP2-B10 (PP2B10).